A 1037-amino-acid chain; its full sequence is Mediator of RNA polymerase II transcription subunit 14 (1037 aa).

Belongs to the Mediator complex subunit 14 family. In terms of assembly, component of the Mediator complex.

The protein resides in the nucleus. In terms of biological role, component of the Mediator complex, a coactivator involved in the regulated transcription of nearly all RNA polymerase II-dependent genes. Mediator functions as a bridge to convey information from gene-specific regulatory proteins to the basal RNA polymerase II transcription machinery. Mediator is recruited to promoters by direct interactions with regulatory proteins and serves as a scaffold for the assembly of a functional preinitiation complex with RNA polymerase II and the general transcription factors. The protein is Mediator of RNA polymerase II transcription subunit 14 (RGR1) of Candida glabrata (strain ATCC 2001 / BCRC 20586 / JCM 3761 / NBRC 0622 / NRRL Y-65 / CBS 138) (Yeast).